A 315-amino-acid chain; its full sequence is Cytochrome bo(3) ubiquinol oxidase subunit 2 (315 aa).

The signal sequence occupies residues 1-24 (MRLRKYNKSLGWLSLFAGTVLLSG). Cys-25 is lipidated: N-palmitoyl cysteine. The S-diacylglycerol cysteine moiety is linked to residue Cys-25. At 25–50 (CNSALLDPKGQIGLEQRSLILTAFGL) the chain is on the periplasmic side. Residues 51 to 68 (MLIVVIPAILMAVGFAWK) traverse the membrane as a helical segment. The Cytoplasmic portion of the chain corresponds to 69–92 (YRASNKDAKYSPNWSHSNKVEAVV). A helical membrane pass occupies residues 93-111 (WTVPILIIIFLAVLTWKTT). Over 112-315 (HALEPSKPLA…MDMSHAESAH (204 aa)) the chain is Periplasmic. The tract at residues 288-315 (MDMTQPEGEHSAHEGMEGMDMSHAESAH) is disordered. Basic and acidic residues predominate over residues 294-315 (EGEHSAHEGMEGMDMSHAESAH).

It belongs to the cytochrome c oxidase subunit 2 family. In terms of assembly, heterooctamer of two A chains, two B chains, two C chains and two D chains.

It is found in the cell inner membrane. Cytochrome bo(3) ubiquinol terminal oxidase is the component of the aerobic respiratory chain of E.coli that predominates when cells are grown at high aeration. Has proton pump activity across the membrane in addition to electron transfer, pumping 2 protons/electron. This chain is Cytochrome bo(3) ubiquinol oxidase subunit 2 (cyoA), found in Escherichia coli O6:H1 (strain CFT073 / ATCC 700928 / UPEC).